A 502-amino-acid chain; its full sequence is 1-aminocyclopropane-1-carboxylate synthase-like protein 1 (502 aa).

The segment at Cys15–Glu35 is disordered. Glu106 provides a ligand contact to substrate. An N6-(pyridoxal phosphate)lysine modification is found at Lys324.

The protein belongs to the class-I pyridoxal-phosphate-dependent aminotransferase family.

Functionally, does not catalyze the synthesis of 1-aminocyclopropane-1-carboxylate but is capable of catalyzing the deamination of L-vinylglycine. This is 1-aminocyclopropane-1-carboxylate synthase-like protein 1 (ACCS) from Bos taurus (Bovine).